The following is an 896-amino-acid chain: DNA mismatch repair protein MutS (896 aa).

An ATP-binding site is contributed by 607 to 614 (GPNMSGKS). The disordered stretch occupies residues 809 to 835 (ANSVAPNTAASMPVEAADESQPVESET).

Belongs to the DNA mismatch repair MutS family.

Functionally, this protein is involved in the repair of mismatches in DNA. It is possible that it carries out the mismatch recognition step. This protein has a weak ATPase activity. In Lactiplantibacillus plantarum (strain ATCC BAA-793 / NCIMB 8826 / WCFS1) (Lactobacillus plantarum), this protein is DNA mismatch repair protein MutS.